The chain runs to 79 residues: Small ribosomal subunit protein bS18 (79 aa).

Belongs to the bacterial ribosomal protein bS18 family. As to quaternary structure, part of the 30S ribosomal subunit. Forms a tight heterodimer with protein bS6.

In terms of biological role, binds as a heterodimer with protein bS6 to the central domain of the 16S rRNA, where it helps stabilize the platform of the 30S subunit. This is Small ribosomal subunit protein bS18 from Rhodopseudomonas palustris (strain BisB5).